The sequence spans 406 residues: MNPAVFLSLADLRCSLLLLVTSIFTPITAEIASLDSENIDEILNNADVALVNFYADWCRFSQMLHPIFEEASDVIKEEYPDKNQVVFARVDCDQHSDIAQRYRISKYPTLKLFRNGMMMKREYRGQRSVKALADYIRQQKSNPVHEIQSLDEVTNLDRSKRNIIGYFEQKDSENYRVFERVASILHDDCAFLSAFGDLSKPERYNGDNVIYKPPGRSAPDMVYLGSMTNFDVTYNWIQDKCVPLVREITFENGEELTEEGLPFLILFHMKDDTESLEIFQNEVARQLISEKGTINFLHADCDKFRHPLLHIQKTPADCPVIAIDSFRHMYVFGDFKDVLIPGKLKQFVFDLHSGKLHREFHHGPDPTDTAPGEQDQDVASSPPESSFQKLAPSEYRYTLLRDRDEL.

An N-terminal signal peptide occupies residues 1 to 29; sequence MNPAVFLSLADLRCSLLLLVTSIFTPITA. The Thioredoxin domain maps to 30–138; that stretch reads EIASLDSENI…VKALADYIRQ (109 aa). 2 disulfides stabilise this stretch: Cys189-Cys241 and Cys301-Cys318. An interaction with ITPR1 region spans residues 236–285; the sequence is WIQDKCVPLVREITFENGEELTEEGLPFLILFHMKDDTESLEIFQNEVAR. The tract at residues 360–387 is disordered; the sequence is FHHGPDPTDTAPGEQDQDVASSPPESSF. Polar residues predominate over residues 377-387; it reads DVASSPPESSF. A Prevents secretion from ER motif is present at residues 403–406; that stretch reads RDEL.

In terms of assembly, forms mixed disulfides with both ERO1A and ERO1B and cargo folding intermediates; the interactions with ERO1A and ERO1B result in their retention in the endoplasmic reticulum. Directly interacts with ITPR1 in a pH-, redox state- and calcium-dependent manner, but not with ITPR2 or ITPR3. The strength of this interaction inversely correlates with calcium concentration. In terms of tissue distribution, widely expressed.

Its subcellular location is the endoplasmic reticulum lumen. Functionally, mediates thiol-dependent retention in the early secretory pathway, forming mixed disulfides with substrate proteins through its conserved CRFS motif. Inhibits the calcium channel activity of ITPR1. May have a role in the control of oxidative protein folding in the endoplasmic reticulum. Required to retain ERO1A and ERO1B in the endoplasmic reticulum. The sequence is that of Endoplasmic reticulum resident protein 44 (Erp44) from Mus musculus (Mouse).